Consider the following 352-residue polypeptide: D-alanine--D-alanine ligase (352 aa).

The ATP-grasp domain maps to 133 to 342 (KTVFAAAGLP…FPKLVDRLIQ (210 aa)). 169–224 (DETIGYPNFVKPANLGSSVGISKVRSRLELEAALDSAASFDRRIVVEAGVVAREVE) contributes to the ATP binding site. Residues aspartate 295, glutamate 309, and asparagine 311 each coordinate Mg(2+).

The protein belongs to the D-alanine--D-alanine ligase family. Requires Mg(2+) as cofactor. Mn(2+) is required as a cofactor.

It is found in the cytoplasm. It catalyses the reaction 2 D-alanine + ATP = D-alanyl-D-alanine + ADP + phosphate + H(+). Its pathway is cell wall biogenesis; peptidoglycan biosynthesis. In terms of biological role, cell wall formation. This Acaryochloris marina (strain MBIC 11017) protein is D-alanine--D-alanine ligase.